The chain runs to 224 residues: Putative tyrosine-protein phosphatase OCA6 (224 aa).

Thr-2 is subject to Phosphothreonine. The 163-residue stretch at Gln-8 to Leu-170 folds into the Tyrosine-protein phosphatase domain. Cys-114 serves as the catalytic Phosphocysteine intermediate.

It belongs to the protein-tyrosine phosphatase family.

The protein resides in the cytoplasm. The enzyme catalyses O-phospho-L-tyrosyl-[protein] + H2O = L-tyrosyl-[protein] + phosphate. Functionally, required for replication of Brome mosaic virus (BMV). This chain is Putative tyrosine-protein phosphatase OCA6 (OCA6), found in Saccharomyces cerevisiae (strain ATCC 204508 / S288c) (Baker's yeast).